Here is a 459-residue protein sequence, read N- to C-terminus: Friend virus susceptibility protein 1 (459 aa).

Residues glutamate 192 to glutamine 269 are disordered. Residues serine 213–aspartate 223 are compositionally biased toward basic and acidic residues. A compositionally biased stretch (polar residues) spans glutamine 226–proline 238.

Retroviral restriction factor that prevents infection by gammaretroviruses. Acts by interacting with the capsid protein ca after entry of the virus into the cell. This interaction presumably disrupt the capsid thereby inactivating the viral genome, making it unable to enter host nucleus and integrate into host genome. This is Friend virus susceptibility protein 1 (Fv1) from Mus musculus (Mouse).